We begin with the raw amino-acid sequence, 443 residues long: Toxin YjjJ (443 aa).

The active-site Proton acceptor is aspartate 342.

This sequence belongs to the HipA Ser/Thr kinase family.

Its function is as follows. Toxic when overexpressed in E.coli, leading to long filamentous cells. The toxic effect is neutralized by non-cognate antitoxin HipB. Does not seem to inhibit DNA, RNA or protein synthesis, and unlike paralogous toxin HipA its toxic activity is not counteracted by overexpression of GltX. Binds DNA. Might be a protein kinase. This Escherichia coli (strain K12) protein is Toxin YjjJ (yjjJ).